We begin with the raw amino-acid sequence, 164 residues long: R-phycoerythrin alpha chain (164 aa).

(2R,3E)-phycoerythrobilin-binding residues include Cys82 and Cys139.

The protein belongs to the phycobiliprotein family. In terms of assembly, heterodimer of an alpha and a beta chain. Post-translationally, contains two covalently linked bilin chromophores.

Its subcellular location is the plastid. The protein localises to the chloroplast thylakoid membrane. In terms of biological role, light-harvesting photosynthetic bile pigment-protein from the phycobiliprotein complex. The chain is R-phycoerythrin alpha chain (cpeA) from Pyropia tenera (Nori).